The primary structure comprises 261 residues: MARGLKKHLKRLNAPKHWMLDKLGGAFAPKPSSGPHKSRECLPLVLIIRNRLKYALTYREVISILMQRHIQVDGKVRTDKTYPAGFMDVVSIPKTNENFRLLYDTKGRFRLHSIKDEEAKFKLCKVRSIQFGQKGIPYLNTYDGRTIRYPDPLIKPNDTIKLDLEENKIVEFIKFDVGNVVMVTGGRNRGRVGVIKNREKHKGSFETIHIQDSTGHEFATRLGNVYTIGKGTKPWVSLPKGKGIKLTIIEEARKRLSAQQA.

The 63-residue stretch at 42-104 (LPLVLIIRNR…TNENFRLLYD (63 aa)) folds into the S4 RNA-binding domain.

Belongs to the eukaryotic ribosomal protein eS4 family.

Its subcellular location is the cytoplasm. The polypeptide is Small ribosomal subunit protein eS4z (RPS4A) (Arabidopsis thaliana (Mouse-ear cress)).